Here is a 187-residue protein sequence, read N- to C-terminus: Ribosome-recycling factor (187 aa).

This sequence belongs to the RRF family.

The protein localises to the cytoplasm. Its function is as follows. Responsible for the release of ribosomes from messenger RNA at the termination of protein biosynthesis. May increase the efficiency of translation by recycling ribosomes from one round of translation to another. In Mycoplasmopsis pulmonis (strain UAB CTIP) (Mycoplasma pulmonis), this protein is Ribosome-recycling factor.